The following is a 910-amino-acid chain: Seizure 6-like protein 2 (910 aa).

A signal peptide spans M1–G27. Residues L28 to N844 lie on the Extracellular side of the membrane. Residues P70 to E152 are disordered. Positions L123–R145 are enriched in pro residues. C173 and C202 are disulfide-bonded. Residues C173–Y286 form the CUB 1 domain. A glycan (N-linked (GlcNAc...) asparagine) is linked at N222. The region spanning L288–A347 is the Sushi 1 domain. 12 disulfide bridges follow: C290–C330, C316–C345, C349–C376, C464–C508, C491–C523, C527–C553, C644–C686, C672–C699, C705–C747, C733–C764, C771–C813, and C799–C828. N-linked (GlcNAc...) asparagine glycosylation is found at N332, N373, N473, and N517. The 111-residue stretch at C349–F459 folds into the CUB 2 domain. In terms of domain architecture, Sushi 2 spans D462–A525. Residues C527 to V638 enclose the CUB 3 domain. Sushi domains are found at residues D642–K701, M703–L766, and E769–V830. A helical membrane pass occupies residues L845–I865. Topologically, residues Y866 to I910 are cytoplasmic.

This sequence belongs to the SEZ6 family. As to expression, expressed exclusively in the brain, predominantly in the neurons. Wide expression in the gray matter of the brain with high levels in the olfactory bulb, anterior olfactory nuclei, hippocampal formation and cerebellar cortex. Detected diffusely and weakly in the white matter, such as the corpus callosum and cerebellar medulla. In the cerebellar cortex, intensely expressed in Purkinje cells (PC) and granule cells. Detected also in interneurons in the molecular layer. Up-regulated at two weeks after birth.

The protein resides in the cell membrane. It is found in the endoplasmic reticulum membrane. May contribute to specialized endoplasmic reticulum functions in neurons. The polypeptide is Seizure 6-like protein 2 (Sez6l2) (Mus musculus (Mouse)).